The primary structure comprises 65 residues: Hirudin-2B (65 aa).

The interaction with thrombin active site stretch occupies residues Ile1–Tyr3. 3 disulfide bridges follow: Cys6-Cys14, Cys16-Cys28, and Cys22-Cys39. Positions Cys39–Gln65 are disordered. The O-linked (GalNAc...) threonine glycan is linked to Thr45. Residues Asp55 to Gln65 form an interaction with fibrinogen-binding exosite of thrombin region. A compositionally biased stretch (acidic residues) spans Asp55–Gln65. At Tyr63 the chain carries Sulfotyrosine.

Belongs to the protease inhibitor I14 (hirudin) family.

It localises to the secreted. Hirudin is a potent thrombin-specific protease inhibitor. It forms a stable non-covalent complex with alpha-thrombin, thereby abolishing its ability to cleave fibrinogen. The chain is Hirudin-2B from Hirudo medicinalis (Medicinal leech).